The following is a 294-amino-acid chain: 1D-myo-inositol 2-acetamido-2-deoxy-alpha-D-glucopyranoside deacetylase (294 aa).

Zn(2+)-binding residues include His15, Asp18, and His150.

It belongs to the MshB deacetylase family. It depends on Zn(2+) as a cofactor.

The enzyme catalyses 1D-myo-inositol 2-acetamido-2-deoxy-alpha-D-glucopyranoside + H2O = 1D-myo-inositol 2-amino-2-deoxy-alpha-D-glucopyranoside + acetate. Its function is as follows. Catalyzes the deacetylation of 1D-myo-inositol 2-acetamido-2-deoxy-alpha-D-glucopyranoside (GlcNAc-Ins) in the mycothiol biosynthesis pathway. The chain is 1D-myo-inositol 2-acetamido-2-deoxy-alpha-D-glucopyranoside deacetylase from Streptomyces avermitilis (strain ATCC 31267 / DSM 46492 / JCM 5070 / NBRC 14893 / NCIMB 12804 / NRRL 8165 / MA-4680).